The sequence spans 168 residues: 6-pyruvoyl tetrahydrobiopterin synthase (168 aa).

Residue histidine 19 participates in Zn(2+) binding. Cysteine 38 (proton acceptor) is an active-site residue. Zn(2+)-binding residues include histidine 44 and histidine 46. Catalysis depends on charge relay system residues histidine 85 and glutamate 130. A Phosphoserine modification is found at serine 159. Threonine 161 carries the phosphothreonine modification. Residues serine 164, serine 165, and serine 167 each carry the phosphoserine modification.

The protein belongs to the PTPS family. Homohexamer formed of two homotrimers in a head to head fashion. Requires Zn(2+) as cofactor.

The catalysed reaction is 7,8-dihydroneopterin 3'-triphosphate = 6-pyruvoyl-5,6,7,8-tetrahydropterin + triphosphate + H(+). It functions in the pathway cofactor biosynthesis; tetrahydrobiopterin biosynthesis; tetrahydrobiopterin from 7,8-dihydroneopterin triphosphate: step 1/3. Functionally, required for pigment and biopterin synthesis. In Drosophila melanogaster (Fruit fly), this protein is 6-pyruvoyl tetrahydrobiopterin synthase (pr).